Consider the following 388-residue polypeptide: MMLLKKGRLLMFLGSQVIVVALFIHMSVHRHLSQREESRRPVHVLVLSSWRSGSSFVGQLFGQHPDVFYLMEPAWHVWMTFTSSTAWKLHMAVRDLLRSVFLCDMSVFDAYMNPGPRKQSSLFQWEQSRALCSAPVCDFFPAHEISSPKHCKLLCGQQPFDMVEKACRSHGFVVLKEVRFLSLQALYPLLTDPSLNLHVVHLVRDPRAVFRSREHTTIELVVDSHIVLGQHLETIKEEDQPYYAMKIICKSQVDIVKAIQTLPEALQQRYLFLRYEDLVRAPLAQTTRLYKFVGLDFLPHLQTWVHNVTRGKGMGQHAFHTNARNALNVSQAWRWSLPYEKVSQLQDACGEAMDLLGYLQVRSQQEQGNLSLDLLSSSHILGQVFREG.

Residues 1 to 7 are Cytoplasmic-facing; it reads MMLLKKG. A helical; Signal-anchor for type II membrane protein transmembrane segment spans residues 8–28; that stretch reads RLLMFLGSQVIVVALFIHMSV. Residues 29 to 388 lie on the Lumenal side of the membrane; that stretch reads HRHLSQREES…HILGQVFREG (360 aa). 3'-phosphoadenylyl sulfate is bound by residues 50–56 and 204–212; these read WRSGSSF and RDPRAVFRS. 3 N-linked (GlcNAc...) asparagine glycosylation sites follow: Asn307, Asn328, and Asn369.

Belongs to the sulfotransferase 1 family. Gal/GlcNAc/GalNAc subfamily. In terms of assembly, monomer. In terms of tissue distribution, specifically expressed in high endothelial venules (HEV) of peripheral lymph nodes.

The protein resides in the golgi apparatus membrane. It catalyses the reaction 3-O-{N-acetyl-beta-D-glucosaminyl-(1-&gt;3)-beta-D-galactosyl-(1-&gt;3)-N-acetyl-alpha-D-galactosaminyl}-L-threonyl-[protein] + 3'-phosphoadenylyl sulfate = 3-O-{6-O-sulfo-N-acetyl-beta-D-glucosaminyl-(1-&gt;3)-beta-D-galactosyl-(1-&gt;3)-N-acetyl-alpha-D-galactosaminyl}-L-threonyl-[protein] + adenosine 3',5'-bisphosphate + H(+). The enzyme catalyses 3-O-{N-acetyl-beta-D-glucosaminyl-(1-&gt;3)-beta-D-galactosyl-(1-&gt;3)-N-acetyl-alpha-D-galactosaminyl}-L-seryl-[protein] + 3'-phosphoadenylyl sulfate = 3-O-{6-O-sulfo-N-acetyl-beta-D-glucosaminyl-(1-&gt;3)-beta-D-galactosyl-(1-&gt;3)-N-acetyl-alpha-D-galactosaminyl}-L-seryl-[protein] + adenosine 3',5'-bisphosphate + H(+). It carries out the reaction a 3-O-{beta-D-galactosyl-(1-&gt;3)-[N-acetyl-beta-D-glucosaminyl-(1-&gt;6)]-N-acetyl-alpha-D-galactosaminyl}-L-threonyl-[protein] + 3'-phosphoadenylyl sulfate = 3-O-{beta-D-galactosyl-(1-&gt;3)-[6-O-sulfo-N-acetyl-beta-D-glucosaminyl-(1-&gt;6)]-N-acetyl-alpha-D-galactosaminyl}-L-threonyl-[protein] + adenosine 3',5'-bisphosphate + H(+). The catalysed reaction is 3-O-{beta-D-galactosyl-(1-&gt;3)-[N-acetyl-beta-D-glucosaminyl-(1-&gt;6)]-N-acetyl-alpha-D-galactosaminyl}-L-seryl-[protein] + 3'-phosphoadenylyl sulfate = 3-O-{beta-D-galactosyl-(1-&gt;3)-[6-O-sulfo-N-acetyl-beta-D-glucosaminyl-(1-&gt;6)]-N-acetyl-alpha-D-galactosaminyl}-L-seryl-[protein] + adenosine 3',5'-bisphosphate + H(+). It functions in the pathway protein modification; carbohydrate sulfation. Its function is as follows. Sulfotransferase involved in SELL/L-selectin ligand biosynthesis pathway. Catalyzes the transfer of the sulfate group from 3'-phospho-5'-adenylyl sulfate (PAPS) onto the hydroxyl group at C-6 position of the non-reducing N-acetylglucosamine (GlcNAc) residue within O-linked mucin-type glycans. Contributes to generate sialyl 6-sulfo Lewis X determinant (also known as MECA-79 epitope) for SELL recognition, a prerequisite for continuous lymphocyte homing into peripheral lymph nodes and antigen immune surveillance. Transfers the sulfate group primarily on core 2 GlcNAcbeta1-6(Galbeta1-3)GalNAcalphaSer/Thr and extended core 1 GlcNAcbeta1-3Galbeta1-3GalNAcalphaSer/Thr based O-linked glycans on CD34 and GLYCAM1 peripheral node addressins (PNAds) expressed on the lumenal side of high endothelial venules (HEVs). The recognition of PNAds by SELL initiates a multistep process comprising tethering and rolling of blood lymphocytes on HEVs against the blood flow, followed by chemokine signaling, integrin-mediated lymphocyte adhesion onto endothelial cells and lymphocyte transendothelial migration. Modulates rolling velocity and differential T and B lymphocyte recruitment into peripheral lymph nodes, with a major role in B lymphocyte homing. Might be redundant in sulfation of MADCAM1 and lymphocyte trafficking to mesenteric lymph nodes. Can also sulfonate core 3 GlcNAcbeta1-3GalNAc-R based glycans as well as GlcNAcbeta1-3Galbeta1-Glc, GlcNAcbeta1-6ManOMe and GlcNAcbeta1-2Man oligosaccharides, which might be ectopically expressed during tumorigenesis. The polypeptide is Carbohydrate sulfotransferase 4 (Chst4) (Mus musculus (Mouse)).